We begin with the raw amino-acid sequence, 319 residues long: Acetyl-coenzyme A carboxylase carboxyl transferase subunit alpha (319 aa).

One can recognise a CoA carboxyltransferase C-terminal domain in the interval 35–296 (NIDEEVHRLR…KAQLLADLAD (262 aa)).

The protein belongs to the AccA family. As to quaternary structure, acetyl-CoA carboxylase is a heterohexamer composed of biotin carboxyl carrier protein (AccB), biotin carboxylase (AccC) and two subunits each of ACCase subunit alpha (AccA) and ACCase subunit beta (AccD).

Its subcellular location is the cytoplasm. The enzyme catalyses N(6)-carboxybiotinyl-L-lysyl-[protein] + acetyl-CoA = N(6)-biotinyl-L-lysyl-[protein] + malonyl-CoA. Its pathway is lipid metabolism; malonyl-CoA biosynthesis; malonyl-CoA from acetyl-CoA: step 1/1. Functionally, component of the acetyl coenzyme A carboxylase (ACC) complex. First, biotin carboxylase catalyzes the carboxylation of biotin on its carrier protein (BCCP) and then the CO(2) group is transferred by the carboxyltransferase to acetyl-CoA to form malonyl-CoA. This Citrobacter koseri (strain ATCC BAA-895 / CDC 4225-83 / SGSC4696) protein is Acetyl-coenzyme A carboxylase carboxyl transferase subunit alpha.